The primary structure comprises 1644 residues: Peroxisome proliferator-activated receptor gamma coactivator-related protein 1 (1644 aa).

Disordered regions lie at residues 1 to 61 (MAAR…DSSF), 170 to 249 (PERD…EVAG), 429 to 616 (LTPK…TSPV), 646 to 761 (AADP…PETP), 773 to 884 (SAPA…QPPG), 978 to 1074 (STVS…EGVV), and 1322 to 1507 (AAPP…NDHY). Positions 12-22 (APPPTGGPGPD) are enriched in pro residues. Residues 213–222 (SSPKLPSWRP) show a composition bias toward low complexity. Ser-232 carries the phosphoserine modification. The interval 425–460 (IMESLTPKEPQSLPASASQGSQKVPRKGRKKKNKEQ) is necessary for interaction with CREB1 and NRF1 and for transcriptional coactivation. A compositionally biased stretch (polar residues) spans 437–446 (LPASASQGSQ). A compositionally biased stretch (basic residues) spans 448 to 457 (VPRKGRKKKN). The segment covering 475 to 496 (SSRGQSTVSAEVNSQAGSSQKQ) has biased composition (polar residues). Low complexity predominate over residues 515–524 (RAWARAWAAA). Ser-541 is subject to Phosphoserine. Polar residues predominate over residues 556-572 (ETSQANPTLSLNDSAQA). The span at 691-702 (DHPKVVSPEGKD) shows a compositional bias: basic and acidic residues. Polar residues predominate over residues 811–821 (MVSTHSEQVSS). 2 stretches are compositionally biased toward pro residues: residues 828–864 (VRPPPPPLPSVSPAGPIPSTVPAPLPPFPPSVPPLLP) and 874–884 (RLPPPPLQPPG). 3 positions are modified to phosphoserine: Ser-1059, Ser-1393, and Ser-1395. The segment at 1361–1432 (EASPCRSEMN…SSSSSVSSSS (72 aa)) is necessary for interaction with CREB1 and NRF1. Composition is skewed to low complexity over residues 1409 to 1433 (SRSVSSGSSRTSEASSSSSVSSSSR) and 1453 to 1489 (SSCSSSGRSRRCSSSSSSSSSSSSCSSRSRSPSVSPC). One can recognise an RRM domain in the interval 1523 to 1599 (RVVFIGKIPG…QPFDLCFGGR (77 aa)).

As to quaternary structure, interacts with CREB1 and NRF1. As to expression, expressed in liver, heart, skeletal muscle, kidney and white and brown adipose tissues.

The protein localises to the nucleus. Acts as a coactivator during transcriptional activation of nuclear genes related to mitochondrial biogenesis and cell growth. Involved in the transcription coactivation of CREB and NRF1 target genes. The polypeptide is Peroxisome proliferator-activated receptor gamma coactivator-related protein 1 (Pprc1) (Mus musculus (Mouse)).